We begin with the raw amino-acid sequence, 75 residues long: uncharacterized protein (75 aa).

Residues 7–26 (ATAPLFVIVGLAVVLTGATG) traverse the membrane as a helical segment.

Its subcellular location is the membrane. This is an uncharacterized protein from Dictyostelium discoideum (Social amoeba).